Consider the following 465-residue polypeptide: Tetratricopeptide repeat protein 38 (465 aa).

TPR repeat units follow at residues 104 to 137 (REQL…HPTD), 176 to 209 (SYVK…EPTD), and 248 to 281 (CHNY…SLQA).

The protein belongs to the TTC38 family.

This is Tetratricopeptide repeat protein 38 (Ttc38) from Mus musculus (Mouse).